Consider the following 21-residue polypeptide: Cutinase 2 (21 aa).

The protein belongs to the cutinase family.

Its subcellular location is the secreted. The catalysed reaction is cutin + H2O = cutin monomers.. Its activity is regulated as follows. Inhibited by diisopropyl fluorophosphate (DFP). Functionally, catalyzes the hydrolysis of complex carboxylic polyesters found in the cell wall of plants. Degrades cutin, a macromolecule that forms the structure of the plant cuticle. Allows pathogenic fungi to penetrate through the cuticular barrier into the host plant during the initial stage of fungal infection. This chain is Cutinase 2, found in Colletotrichum gloeosporioides (Anthracnose fungus).